A 279-amino-acid chain; its full sequence is Very long chain fatty acid elongase 1 (279 aa).

At Met1 the chain carries N-acetylmethionine. 7 helical membrane passes run Pro23 to Leu43, Phe61 to Leu81, Val110 to Leu130, Val137 to Trp154, Val176 to Trp196, Ala203 to Pro223, and Ile231 to Trp251. The Di-lysine motif signature appears at Lys275–Asn279.

Belongs to the ELO family. ELOVL1 subfamily. In terms of assembly, interacts with LASS2, TECR and HSD17B12. Interacts with TECR. As to expression, expressed in a broad variety of tissues. Highly expressed in stomach, lung, kidney, skin and intestine. Moderately expressed in white adipose tissue, liver, spleen, brain, brown adipose tissue, heart and muscle. Weakly expressed in testis.

It is found in the endoplasmic reticulum membrane. The enzyme catalyses a very-long-chain acyl-CoA + malonyl-CoA + H(+) = a very-long-chain 3-oxoacyl-CoA + CO2 + CoA. It catalyses the reaction eicosanoyl-CoA + malonyl-CoA + H(+) = 3-oxodocosanoyl-CoA + CO2 + CoA. The catalysed reaction is docosanoyl-CoA + malonyl-CoA + H(+) = 3-oxotetracosanoyl-CoA + CO2 + CoA. It carries out the reaction tetracosanoyl-CoA + malonyl-CoA + H(+) = 3-oxohexacosanoyl-CoA + CO2 + CoA. The enzyme catalyses (11Z)-eicosenoyl-CoA + malonyl-CoA + H(+) = 3-oxo-(13Z)-docosenoyl-CoA + CO2 + CoA. It catalyses the reaction (13Z)-docosenoyl-CoA + malonyl-CoA + H(+) = 3-oxo-(15Z)-tetracosenoyl-CoA + CO2 + CoA. It participates in lipid metabolism; fatty acid biosynthesis. Its function is as follows. Catalyzes the first and rate-limiting reaction of the four reactions that constitute the long-chain fatty acids elongation cycle. This endoplasmic reticulum-bound enzymatic process allows the addition of 2 carbons to the chain of long- and very long-chain fatty acids (VLCFAs) per cycle. Condensing enzyme that exhibits activity toward saturated and monounsaturated acyl-CoA substrates, with the highest activity towards C22:0 acyl-CoA. May participate in the production of both saturated and monounsaturated VLCFAs of different chain lengths that are involved in multiple biological processes as precursors of membrane lipids and lipid mediators. Important for saturated C24:0 and monounsaturated C24:1 sphingolipid synthesis. Indirectly inhibits RPE65 via production of VLCFAs. This Mus musculus (Mouse) protein is Very long chain fatty acid elongase 1.